The chain runs to 227 residues: Glutathione S-transferase U13 (227 aa).

The region spanning 5–86 (DTVKLIGSWS…YVDEAWPSVP (82 aa)) is the GST N-terminal domain. Glutathione-binding positions include 15–16 (SP), 43–44 (EK), 57–58 (KV), and 70–71 (ES). One can recognise a GST C-terminal domain in the interval 92–224 (DAYDRASARF…EVVAFAKQKF (133 aa)). A Phosphothreonine modification is found at threonine 158.

Belongs to the GST superfamily. Tau family.

The protein localises to the cytoplasm. It localises to the cytosol. It catalyses the reaction RX + glutathione = an S-substituted glutathione + a halide anion + H(+). In vitro, possesses glutathione S-transferase activity toward 1-chloro-2,4-dinitrobenzene (CDNB) and benzyl isothiocyanate (BITC). May be involved in the conjugation of reduced glutathione to a wide number of exogenous and endogenous hydrophobic electrophiles and have a detoxification role against certain herbicides. This is Glutathione S-transferase U13 (GSTU13) from Arabidopsis thaliana (Mouse-ear cress).